The chain runs to 762 residues: MKRRAASPAMSENEVDIAGSLFANHADSDDEVQVHKQQPADLDFGDLLDNGDGSDDGGDAAFIAKQQRSSNRKTGSLQSKSAKKSGGFQAMGLNSNLLRAISRKGFSVPTPIQRKTIPLVLERRDVVGMARTGSGKTAAFVIPMIERLKAHSARVGARAIIMSPSRELALQTLKVVKELGKGTDLKTVLLVGGDSLEEQFGLMAANPDIIIATPGRFLHLKVEMSLNLSSVRYVVFDEADRLFEMGFAAQLTEILHALPPSRQTLLFSATLPSSLVEFARAGLQEPSLIRLDAETKVSPDLESAFFSVKGGEKEGALLHILHDVIKMPLGVPEGIEEETDEQQARKRKRDSERRNRKEKPTEHSTIIFTATKHHVEYIAHLLRHAGFSVSYIYGSLDQTARKIQVDNFRRGRTNILVVTDVAARGIDIPVLANVINYDFPPQPKIFVHRVGRTARAGQRGWAYALLQGTSRPCGGRVRRMRTQRWRMQTRMNQPLRKTKWTSSPEKTNPPGDDEEAWEDEESESELEVTVTSSGKSYQGANILPRPRNLHVLHTIAPPAPAEERGVRAFNSGGTTQFVEAARDAAMDLANDDGAKAFGLPTRSKLRWDKRHSKYVARANDDDGSRGAKMIRGESGVKIAASFQSGRFDKWRRANRLGRLPGVGEAEKANLVRNFSGGGPGGAGAGHYKHRQEKAPKDADKFRDDYHVRKKRVAEAREKRIGKYKDGEGSRRELKSATDIRKARQVQEQKREKNARPAKRAKR.

2 disordered regions span residues 20 to 50 and 65 to 88; these read SLFANHADSDDEVQVHKQQPADLDFGDLLDN and KQQRSSNRKTGSLQSKSAKKSGGF. Positions 41–50 are enriched in low complexity; that stretch reads DLDFGDLLDN. Positions 66 to 80 are enriched in polar residues; the sequence is QQRSSNRKTGSLQSK. Residues 86–114 carry the Q motif motif; the sequence is GGFQAMGLNSNLLRAISRKGFSVPTPIQR. Residues 117–289 form the Helicase ATP-binding domain; sequence IPLVLERRDV…RAGLQEPSLI (173 aa). 130–137 serves as a coordination point for ATP; that stretch reads ARTGSGKT. Positions 237–240 match the DEAD box motif; sequence DEAD. Disordered stretches follow at residues 333–363, 491–523, and 671–762; these read EGIEEETDEQQARKRKRDSERRNRKEKPTEH, MNQPLRKTKWTSSPEKTNPPGDDEEAWEDEESE, and VRNF…RAKR. The region spanning 334 to 511 is the Helicase C-terminal domain; that stretch reads GIEEETDEQQ…SSPEKTNPPG (178 aa). Basic and acidic residues predominate over residues 349-362; the sequence is RDSERRNRKEKPTE. A compositionally biased stretch (acidic residues) spans 511–523; the sequence is GDDEEAWEDEESE. Positions 675 to 684 are enriched in gly residues; it reads SGGGPGGAGA. The segment covering 692 to 754 has biased composition (basic and acidic residues); sequence EKAPKDADKF…VQEQKREKNA (63 aa).

The protein belongs to the DEAD box helicase family. DDX54/DBP10 subfamily.

It localises to the nucleus. It is found in the nucleolus. The catalysed reaction is ATP + H2O = ADP + phosphate + H(+). Functionally, ATP-binding RNA helicase involved in the biogenesis of 60S ribosomal subunits and is required for the normal formation of 25S and 5.8S rRNAs. In Chaetomium globosum (strain ATCC 6205 / CBS 148.51 / DSM 1962 / NBRC 6347 / NRRL 1970) (Soil fungus), this protein is ATP-dependent RNA helicase DBP10 (DBP10).